We begin with the raw amino-acid sequence, 82 residues long: Protein Vpu (82 aa).

Topologically, residues 1–7 are extracellular; the sequence is MQPLQIS. Residues 8–28 traverse the membrane as a helical segment; it reads AIVALVVAAIIAIVVWSIALL. The Cytoplasmic segment spans residues 29 to 82; the sequence is EYRKLLRQRKIDRLIDRIRERAEDSGNESEGDQEELSALVEMGGHDAPWDIDDL. Residues S53 and S57 each carry the phosphoserine; by host CK2 modification.

This sequence belongs to the HIV-1 VPU protein family. As to quaternary structure, homopentamer. Interacts with host CD4 and BRTC; these interactions induce proteasomal degradation of CD4. Interacts with host BST2; this interaction leads to the degradation of host BST2. Interacts with host FBXW11. Interacts with host AP1M1; this interaction plays a role in the mistrafficking and subsequent degradation of host BST2. Interacts with host RANBP2; this interaction allows Vpu to down-regulate host BLM sumoylation. Post-translationally, phosphorylated by host CK2. This phosphorylation is necessary for interaction with human BTRC and degradation of CD4.

The protein resides in the host membrane. With respect to regulation, ion channel activity is inhibited by hexamethylene amiloride in vitro. In terms of biological role, enhances virion budding by targeting host CD4 and Tetherin/BST2 to proteasome degradation. Degradation of CD4 prevents any unwanted premature interactions between viral Env and its host receptor CD4 in the endoplasmic reticulum. Degradation of antiretroviral protein Tetherin/BST2 is important for virion budding, as BST2 tethers new viral particles to the host cell membrane. Mechanistically, Vpu bridges either CD4 or BST2 to BTRC, a substrate recognition subunit of the Skp1/Cullin/F-box protein E3 ubiquitin ligase, induces their ubiquitination and subsequent proteasomal degradation. The alteration of the E3 ligase specificity by Vpu seems to promote the degradation of host IKBKB, leading to NF-kappa-B down-regulation and subsequent apoptosis. Acts as a viroporin that forms an oligomeric ion channel in membranes. Modulates the host DNA repair mechanisms to promote degradation of nuclear viral cDNA in cells that are already productively infected in order to suppress immune sensing and proviral hyper-integration (superinfection). Manipulates PML-NBs and modulates SUMOylation of host BLM protein thereby enhancing its DNA-end processing activity toward viral unintegrated linear DNA. Also inhibits RAD52-mediated homologous repair of viral cDNA, preventing the generation of dead-end circular forms of single copies of the long terminal repeat and permitting sustained nucleolytic attack. This chain is Protein Vpu, found in Homo sapiens (Human).